Here is a 173-residue protein sequence, read N- to C-terminus: NADH-ubiquinone oxidoreductase chain 6 (173 aa).

The next 5 membrane-spanning stretches (helical) occupy residues 1-21, 27-47, 48-68, 87-107, and 139-159; these read MTYFVLFLGLCFVLGGLAVAS, YGVVGLVVASVAGCGWLLSLG, VSFVSLVLFMVYLGGMLVVFV, VVGYGAGFVLVLVVGGVVGGL, and CGVGMFLVAGWGLLLTLFVVL.

It belongs to the complex I subunit 6 family.

The protein localises to the mitochondrion membrane. It carries out the reaction a ubiquinone + NADH + 5 H(+)(in) = a ubiquinol + NAD(+) + 4 H(+)(out). Its function is as follows. Core subunit of the mitochondrial membrane respiratory chain NADH dehydrogenase (Complex I) that is believed to belong to the minimal assembly required for catalysis. Complex I functions in the transfer of electrons from NADH to the respiratory chain. The immediate electron acceptor for the enzyme is believed to be ubiquinone. In Larus canus (Common gull), this protein is NADH-ubiquinone oxidoreductase chain 6 (MT-ND6).